A 277-amino-acid chain; its full sequence is Putative thiosulfate sulfurtransferase (277 aa).

2 Rhodanese domains span residues 18 to 125 (DSAN…PLST) and 154 to 274 (SIKI…VPIE). The Cysteine persulfide intermediate role is filled by cysteine 233. A substrate-binding site is contributed by arginine 238.

The enzyme catalyses thiosulfate + hydrogen cyanide = thiocyanate + sulfite + 2 H(+). In terms of biological role, may be a sulfotransferase involved in the formation of thiosulfate. The polypeptide is Putative thiosulfate sulfurtransferase (cysA) (Mycobacterium leprae (strain TN)).